We begin with the raw amino-acid sequence, 431 residues long: Magnetosome protein MamH (431 aa).

A run of 11 helical transmembrane segments spans residues 21–41 (LLSA…PLFL), 57–77 (ANVQ…LGYL), 86–106 (IIVA…LSPW), 107–127 (IGGA…IMSA), 156–176 (TAFM…QIPA), 178–198 (AGIA…AWLA), 243–263 (MVFV…LIKV), 274–294 (ILIG…RSFI), 302–321 (AVLL…GFII), 358–378 (LLGS…IFFV), and 380–400 (VGGF…TGVG).

The protein belongs to the major facilitator superfamily.

It is found in the magnetosome membrane. Its function is as follows. Required for correct biomineralization of the magnetosome; probably transports some form of iron. Partially functionally redundant with MamZ. The chain is Magnetosome protein MamH (mamH) from Paramagnetospirillum magneticum (strain ATCC 700264 / AMB-1) (Magnetospirillum magneticum).